A 262-amino-acid chain; its full sequence is Acyl-coenzyme A diphosphatase FITM2 (262 aa).

At 1 to 23 (MEHLERCAWVLRGTLVRAAVRRY) the chain is on the cytoplasmic side. A helical transmembrane segment spans residues 24 to 44 (LPWALAASMLAGSLLKELSPL). Residues 45 to 57 (PESYLSNKRNVLN) are Lumenal-facing. A helical membrane pass occupies residues 58–78 (VYFVKVAWAWTFCLLLPFIAL). Residues 79 to 93 (TNYHLTGKAGLVLRR) are Cytoplasmic-facing. Residues 94–114 (LSTLLVGTAIWYVCTAIFSNV) traverse the membrane as a helical segment. Residues 115–145 (EHYTGSCYQSPALEGVRNEPLSKQQCHGQGG) lie on the Lumenal side of the membrane. A helical transmembrane segment spans residues 146-166 (FWHGFDISGHSFLLTFCALMI). The active site involves histidine 155. At 167–185 (VEEMAVLHEVKTDRSHCLH) the chain is on the cytoplasmic side. Residues 186-206 (VAITALVVALGFLTFIWVWMF) traverse the membrane as a helical segment. The Lumenal portion of the chain corresponds to 207 to 218 (LCTAVYFHNLSQ). Histidine 214 is an active-site residue. A helical transmembrane segment spans residues 219-239 (KVFGTLFGLLGWYGTYGFWYL). Residues 240–262 (KSFSPGLPPQSCSSNLKQDSYKR) are Cytoplasmic-facing.

The protein belongs to the FIT family. FIT2 subfamily.

The protein resides in the endoplasmic reticulum membrane. It catalyses the reaction an acyl-CoA + H2O = an acyl-4'-phosphopantetheine + adenosine 3',5'-bisphosphate + 2 H(+). It carries out the reaction (9Z)-octadecenoyl-CoA + H2O = S-(9Z-octadecenoyl)-4'-phosphopantetheine + adenosine 3',5'-bisphosphate + 2 H(+). The catalysed reaction is (5Z,8Z,11Z,14Z)-eicosatetraenoyl-CoA + H2O = S-(5Z,8Z,11Z,14Z-eicosatetraenoyl)-4'-phosphopantetheine + adenosine 3',5'-bisphosphate + 2 H(+). The enzyme catalyses hexadecanoyl-CoA + H2O = S-hexadecanoyl-4'-phosphopantetheine + adenosine 3',5'-bisphosphate + 2 H(+). Fatty acyl-coenzyme A (CoA) diphosphatase that hydrolyzes fatty acyl-CoA to yield acyl-4'-phosphopantetheine and adenosine 3',5'-bisphosphate. Preferentially hydrolyzes unsaturated long-chain acyl-CoA substrates such as oleoyl-CoA/(9Z)-octadecenoyl-CoA and arachidonoyl-CoA/(5Z,8Z,11Z,14Z)-eicosatetraenoyl-CoA in the endoplasmic reticulum (ER) lumen. This catalytic activity is required for maintaining ER structure and for lipid droplets (LDs) biogenesis, which are lipid storage organelles involved in maintaining lipid and energy homeostasis. Directly binds to diacylglycerol (DAGs) and triacylglycerol, which is also important for LD biogenesis. May support directional budding of nacent LDs from the ER into the cytosol by reducing DAG levels at sites of LD formation. Plays a role in the regulation of cell morphology and cytoskeletal organization. This Sus scrofa (Pig) protein is Acyl-coenzyme A diphosphatase FITM2.